A 429-amino-acid chain; its full sequence is Adenylosuccinate synthetase (429 aa).

GTP is bound by residues 12 to 18 (GDEGKGK) and 40 to 42 (GHT). Aspartate 13 acts as the Proton acceptor in catalysis. Mg(2+) is bound by residues aspartate 13 and glycine 40. IMP is bound by residues 13 to 16 (DEGK), 38 to 41 (NAGH), threonine 129, arginine 143, glutamine 223, threonine 238, and arginine 302. Residue histidine 41 is the Proton donor of the active site. 298–304 (TVTGRPR) serves as a coordination point for substrate. GTP is bound by residues arginine 304, 330-332 (KLD), and 412-414 (STS).

The protein belongs to the adenylosuccinate synthetase family. In terms of assembly, homodimer. Mg(2+) is required as a cofactor.

The protein localises to the cytoplasm. It catalyses the reaction IMP + L-aspartate + GTP = N(6)-(1,2-dicarboxyethyl)-AMP + GDP + phosphate + 2 H(+). It functions in the pathway purine metabolism; AMP biosynthesis via de novo pathway; AMP from IMP: step 1/2. Its function is as follows. Plays an important role in the de novo pathway of purine nucleotide biosynthesis. Catalyzes the first committed step in the biosynthesis of AMP from IMP. This chain is Adenylosuccinate synthetase, found in Paramagnetospirillum magneticum (strain ATCC 700264 / AMB-1) (Magnetospirillum magneticum).